The chain runs to 708 residues: Potassium-transporting ATPase ATP-binding subunit 2 (708 aa).

The segment at 1 to 23 (MRSPSRLPHETRDSRQRTPKTDM) is disordered. Basic and acidic residues predominate over residues 7–23 (LPHETRDSRQRTPKTDM). 4 consecutive transmembrane segments (helical) span residues 49–69 (MFIV…PNLF), 84–104 (GLIT…EAVA), 235–255 (IALT…VATM), and 283–303 (SIAI…GGLL). Asp-339 (4-aspartylphosphate intermediate) is an active-site residue. ATP-binding positions include Asp-376, Glu-380, 407–414 (FSAKTRMS), and Lys-426. Mg(2+) is bound by residues Asp-549 and Asp-553. Transmembrane regions (helical) follow at residues 619–639 (FAIL…IMGL), 645–665 (AIIS…PLAL), and 683–703 (IFIY…LIDV).

The protein belongs to the cation transport ATPase (P-type) (TC 3.A.3) family. Type IA subfamily. In terms of assembly, the system is composed of three essential subunits: KdpA, KdpB and KdpC.

It localises to the cell inner membrane. It carries out the reaction K(+)(out) + ATP + H2O = K(+)(in) + ADP + phosphate + H(+). Functionally, part of the high-affinity ATP-driven potassium transport (or Kdp) system, which catalyzes the hydrolysis of ATP coupled with the electrogenic transport of potassium into the cytoplasm. This subunit is responsible for energy coupling to the transport system and for the release of the potassium ions to the cytoplasm. In Nostoc sp. (strain PCC 7120 / SAG 25.82 / UTEX 2576), this protein is Potassium-transporting ATPase ATP-binding subunit 2.